A 486-amino-acid polypeptide reads, in one-letter code: MKGKVAQKRAAASPSGVGEVIRVMPAVVDVEFPHGGVPEVLGALESELEYAGEKLVLEVAQHLGDRMVRCVAMGSTDSLSRGDKFISTGNQMMAPVGRGTLGRVFDVLGRPIDGLGSVSSDVEFRPIHAKAPSLSEQRVAAEVLVTGIKVVDLLAPYLKGGKVGLFGGAGVGKTVLIMELISNVARAHKGFSVFAGVGERTREGNDLYREMVESGVISRDEPSKSQAVLVYGQMNEPPGARMRVALTALTMAEYFRDSEGQDVLFFVDNVFRFTQSGSEVSALLGRIPSAVGYQPTLAAEMGAMQERITSTNTGSITSVQAIYVPADDLTDPAPAASFAHLDSTTVLSRQISELGIYPAVDPLESTSQALSPEVVGSEHYEVAQEVKRILQTYKSLQDIIAILGMDELSQEDKLLVARARKIQRFLSQPFHVAEVFTGHPGSFVSLEDTVRSFKGLVEGQYDDLPEAAFYMVGGIDDAVKKAASLK.

Residue 167-174 coordinates ATP; the sequence is GGAGVGKT.

The protein belongs to the ATPase alpha/beta chains family. F-type ATPases have 2 components, CF(1) - the catalytic core - and CF(0) - the membrane proton channel. CF(1) has five subunits: alpha(3), beta(3), gamma(1), delta(1), epsilon(1). CF(0) has three main subunits: a(1), b(2) and c(9-12). The alpha and beta chains form an alternating ring which encloses part of the gamma chain. CF(1) is attached to CF(0) by a central stalk formed by the gamma and epsilon chains, while a peripheral stalk is formed by the delta and b chains.

Its subcellular location is the cell inner membrane. The enzyme catalyses ATP + H2O + 4 H(+)(in) = ADP + phosphate + 5 H(+)(out). In terms of biological role, produces ATP from ADP in the presence of a proton gradient across the membrane. The catalytic sites are hosted primarily by the beta subunits. This is ATP synthase subunit beta from Anaplasma marginale (strain St. Maries).